Consider the following 284-residue polypeptide: Cell division protein FtsQ (284 aa).

Positions Met-1–Arg-10 are enriched in basic residues. Positions Met-1–Gly-23 are disordered. At Met-1–Lys-34 the chain is on the cytoplasmic side. A helical transmembrane segment spans residues Val-35–Leu-52. The Periplasmic portion of the chain corresponds to Arg-53–Arg-284. The POTRA domain occupies Phe-62–His-130.

The protein belongs to the FtsQ/DivIB family. FtsQ subfamily.

Its subcellular location is the cell inner membrane. In terms of biological role, essential cell division protein. The chain is Cell division protein FtsQ from Myxococcus fulvus (strain ATCC BAA-855 / HW-1).